A 147-amino-acid chain; its full sequence is MVRLTDSEKAEVVSLWSKVDEKIIGSEALGRLLVIYPWTQRFFEHFGDLSTADAIMKNPRVQAHGEKVLSSFGEGLNHLDNLRGTFAQLSELHCDELHVDPENFRLLGNILVVVLARHYGKEFTLEVQAACQKFVAGMANALAHKYH.

Positions 3-147 (RLTDSEKAEV…MANALAHKYH (145 aa)) constitute a Globin domain. Residues His-64 and His-93 each contribute to the heme b site.

Belongs to the globin family. In terms of assembly, heterotetramer of two delta chains and two alpha chains. Red blood cells.

The polypeptide is Hemoglobin subunit deltaH (Heterohyrax brucei (Yellow-spotted hyrax)).